Here is a 430-residue protein sequence, read N- to C-terminus: DNA damage-inducible protein DIN7 (430 aa).

An N-domain region spans residues M1–R96. Mg(2+)-binding residues include D30, D78, E150, D152, D171, D173, and D227. Residues N114–Y247 are I-domain.

Belongs to the XPG/RAD2 endonuclease family. It depends on Mg(2+) as a cofactor.

It is found in the nucleus. In terms of biological role, 5'-&gt;3' double-stranded DNA exonuclease. The sequence is that of DNA damage-inducible protein DIN7 (DIN7) from Saccharomyces cerevisiae (strain ATCC 204508 / S288c) (Baker's yeast).